The chain runs to 116 residues: Large ribosomal subunit protein bL19 (116 aa).

Belongs to the bacterial ribosomal protein bL19 family.

Its function is as follows. This protein is located at the 30S-50S ribosomal subunit interface and may play a role in the structure and function of the aminoacyl-tRNA binding site. This is Large ribosomal subunit protein bL19 from Histophilus somni (strain 129Pt) (Haemophilus somnus).